The following is a 334-amino-acid chain: Malate dehydrogenase, cytoplasmic (334 aa).

11–17 (GAAGQIA) is an NAD(+) binding site. Substrate contacts are provided by Arg-92 and Arg-98. Residues Asn-105, Gln-112, and 129–131 (VGN) contribute to the NAD(+) site. Substrate-binding residues include Asn-131 and Arg-162. His-187 serves as the catalytic Proton acceptor.

Belongs to the LDH/MDH superfamily. MDH type 2 family. In terms of assembly, homodimer.

The protein resides in the cytoplasm. It is found in the cytosol. It catalyses the reaction (S)-malate + NAD(+) = oxaloacetate + NADH + H(+). The catalysed reaction is (S)-2-hydroxyglutarate + NAD(+) = 2-oxoglutarate + NADH + H(+). Functionally, catalyzes the reduction of aromatic alpha-keto acids in the presence of NADH. Plays essential roles in the malate-aspartate shuttle and the tricarboxylic acid cycle, important in mitochondrial NADH supply for oxidative phosphorylation. Catalyzes the reduction of 2-oxoglutarate to 2-hydroxyglutarate, leading to elevated reactive oxygen species (ROS). This chain is Malate dehydrogenase, cytoplasmic (mdh1), found in Xenopus laevis (African clawed frog).